A 351-amino-acid chain; its full sequence is Molybdenum import ATP-binding protein ModC (351 aa).

Residues 1 to 229 (MLQINVKKQL…PIFAPWKGES (229 aa)) form the ABC transporter domain. Position 31 to 38 (31 to 38 (GLSGSGKT)) interacts with ATP. Positions 289 to 351 (QTSIRNILRG…YVQIKAVSVM (63 aa)) constitute a Mop domain.

The protein belongs to the ABC transporter superfamily. Molybdate importer (TC 3.A.1.8) family. The complex is composed of two ATP-binding proteins (ModC), two transmembrane proteins (ModB) and a solute-binding protein (ModA).

Its subcellular location is the cell inner membrane. It catalyses the reaction molybdate(out) + ATP + H2O = molybdate(in) + ADP + phosphate + H(+). Its function is as follows. Part of the ABC transporter complex ModABC involved in molybdenum import. Responsible for energy coupling to the transport system. The protein is Molybdenum import ATP-binding protein ModC of Haemophilus influenzae (strain ATCC 51907 / DSM 11121 / KW20 / Rd).